The primary structure comprises 310 residues: Putrescinyltransferase (310 aa).

It belongs to the thymidine aminotransferase family.

The enzyme catalyses 5-phosphomethyl-dUMP in DNA + putrescine = 5-N(alpha)-putrescinyl-dTMP in DNA + phosphate. Transfers putrescine to 5-phosphomethyl-2'-deoxyuridine (5-PmdU) to produce 5-Nalpha-putrescinylthymidine (Nalpha-PutT) as a step in the pathway leading to thymidine hypermodifications in the viral genome. As a final result of the pathway of hypermodification, Nalpha-PutT substitutes for about 50% of thymidines in the viral DNA. These modifications probably prevent degradation of viral genome by the host restriction-modification antiviral defense system. The protein is Putrescinyltransferase of Delftia phage PhiW-14 (Deftia acidovorans bacteriophage phiW-14).